We begin with the raw amino-acid sequence, 153 residues long: Ribosome maturation factor RimP (153 aa).

This sequence belongs to the RimP family.

Its subcellular location is the cytoplasm. Functionally, required for maturation of 30S ribosomal subunits. In Marinobacter nauticus (strain ATCC 700491 / DSM 11845 / VT8) (Marinobacter aquaeolei), this protein is Ribosome maturation factor RimP.